Reading from the N-terminus, the 210-residue chain is LexA repressor (210 aa).

The H-T-H motif DNA-binding region spans 29 to 49 (VREIGEAVDLSSTSTVHGHIS). Residues serine 130 and lysine 168 each act as for autocatalytic cleavage activity in the active site.

This sequence belongs to the peptidase S24 family. In terms of assembly, homodimer.

The enzyme catalyses Hydrolysis of Ala-|-Gly bond in repressor LexA.. Functionally, represses a number of genes involved in the response to DNA damage (SOS response), including recA and lexA. In the presence of single-stranded DNA, RecA interacts with LexA causing an autocatalytic cleavage which disrupts the DNA-binding part of LexA, leading to derepression of the SOS regulon and eventually DNA repair. The polypeptide is LexA repressor (Lactiplantibacillus plantarum (strain ATCC BAA-793 / NCIMB 8826 / WCFS1) (Lactobacillus plantarum)).